Here is a 423-residue protein sequence, read N- to C-terminus: Endochitinase 1 (423 aa).

The first 22 residues, 1–22 (MPSLFAQSLAIIATLQATLGLA), serve as a signal peptide directing secretion. The 363-residue stretch at 39 to 401 (YVNAVYFTNW…GTSSNKLGGP (363 aa)) folds into the GH18 domain. Asparagine 74, asparagine 78, and asparagine 96 each carry an N-linked (GlcNAc...) asparagine glycan. Chitin is bound by residues 103-104 (GT) and 130-133 (GGWT). Catalysis depends on glutamate 172, which acts as the Proton donor. Chitin contacts are provided by residues tyrosine 173 and 238–241 (MAYD). Asparagine 248 is a glycosylation site (N-linked (GlcNAc...) asparagine). Tryptophan 378 provides a ligand contact to chitin. Residues 380–423 (ASSDRSGSQSLIGTSSNKLGGPDSTENLLNYPDSKYDNMRKQMA) form a disordered region. The segment covering 383–407 (DRSGSQSLIGTSSNKLGGPDSTENL) has biased composition (polar residues). Residues 413 to 423 (SKYDNMRKQMA) are compositionally biased toward basic and acidic residues.

It belongs to the glycosyl hydrolase 18 family. Chitinase class V subfamily.

The protein resides in the secreted. The enzyme catalyses Random endo-hydrolysis of N-acetyl-beta-D-glucosaminide (1-&gt;4)-beta-linkages in chitin and chitodextrins.. In terms of biological role, secreted chitinase involved in the degradation of chitin, a component of the cell walls of fungi and exoskeletal elements of some animals (including worms and arthropods). Participates in the infection process and directly acts in the penetration process of the host cuticle. In Metarhizium anisopliae (Entomophthora anisopliae), this protein is Endochitinase 1 (chit1).